The chain runs to 229 residues: MVAGLRDFTLRTEDGSGKPVLDESNGEELMHVQTSVAVALGNRPIESPGTLYITSRKLIWLSDVDMAKGYAVDFLSISLHAVSRDPEAYSSPCIYTQIEVEEDEDDESDSESTEVLDLSKIREMRLVPSDSTQLETLFDVFCECAELNPEPVQEEEEESGHNWVFSADQMDVRGGDDDAEWQISQSPTSVIGHSNGDEGLNQPMLELQINDQRFEDAEEMVHESETKDH.

This sequence belongs to the pICln (TC 1.A.47) family. As to quaternary structure, homooligomer.

The protein localises to the cytoplasm. It localises to the nucleus. May participate in cellular volume control by activation of a swelling-induced chloride conductance pathway. The polypeptide is Chloride conductance regulatory protein ICln (Arabidopsis thaliana (Mouse-ear cress)).